We begin with the raw amino-acid sequence, 149 residues long: UPF0179 protein MA_3685 (149 aa).

Belongs to the UPF0179 family.

The sequence is that of UPF0179 protein MA_3685 from Methanosarcina acetivorans (strain ATCC 35395 / DSM 2834 / JCM 12185 / C2A).